The sequence spans 411 residues: Receptor GIN3 (411 aa).

At 1–99 (MSGFVAGEEA…LLPILPHPRN (99 aa)) the chain is on the extracellular side. A helical transmembrane segment spans residues 100-120 (IPIIVPLFCVFTVMTSLAVGL). Over 121 to 134 (RLWSRQKVAGGIRS) the chain is Cytoplasmic. The chain crosses the membrane as a helical span at residues 135-155 (FDWLALAGFGLTIIYGAVSVY). Residues 156-181 (HSKVSGPYQAFYDRTWDQMKENYKVY) are Extracellular-facing. A helical transmembrane segment spans residues 182–202 (LVLTIMYPFIMGLIKISLLLF). Over 203–227 (YYRVATLNYVQWAVYATGSLTIANS) the chain is Cytoplasmic. A helical transmembrane segment spans residues 228-248 (IAAIITHCLAFMPIDFWNHFL). Topologically, residues 249–262 (QSPFKFNSRTPMLV) are extracellular. The chain crosses the membrane as a helical span at residues 263–283 (FGAVYILTDVAILIIPMPMVF). Residues 284 to 292 (QLKLYPREK) lie on the Cytoplasmic side of the membrane. A helical transmembrane segment spans residues 293 to 313 (VIAVIAFSLGGVACVASGFRI). Residues 314 to 328 (WAIDEFQNYSGKNSS) lie on the Extracellular side of the membrane. 2 N-linked (GlcNAc...) asparagine glycosylation sites follow: Asn321 and Asn326. A helical membrane pass occupies residues 329-349 (GLMIDAWTMIELNLTLICASA). The Cytoplasmic segment spans residues 350-411 (PAIRALAIHY…QSPVIPKEVV (62 aa)). The segment at 371 to 411 (FSSSGATRGSKSAGSSGKSKTPESEKSMQVSQSPVIPKEVV) is disordered. A compositionally biased stretch (low complexity) spans 372–389 (SSSGATRGSKSAGSSGKS).

This sequence belongs to the SAT4 family. Interacts with guanine nucleotide-binding protein alpha GPA2; to activate adenylate cyclase and positively regulate nematode trap formation.

The protein localises to the cell membrane. Functionally, receptor that senses nematode-derived signals at the cell surface and signals via adenylate cyclase to positively regulate trap formation for nematode capture. The sequence is that of Receptor GIN3 from Arthrobotrys oligospora (strain ATCC 24927 / CBS 115.81 / DSM 1491) (Nematode-trapping fungus).